Consider the following 142-residue polypeptide: Putative transmembrane protein INAFM1 (142 aa).

Gly residues predominate over residues 1–19; sequence MRGTSCVGGGAESPGGAGL. Residues 1–22 are disordered; sequence MRGTSCVGGGAESPGGAGLSEG. A helical transmembrane segment spans residues 36–56; it reads YFLCVSLAAVLLAVYYGLIWV. Disordered regions lie at residues 61–83 and 99–142; these read PAAP…PGVP and VPGG…RRPG. The span at 64–83 shows a compositional bias: pro residues; that stretch reads PAGPQPSAPSPPCAARPGVP. A compositionally biased stretch (low complexity) spans 99–111; sequence VPGGPRPQLQLPL. The span at 117-142 shows a compositional bias: basic and acidic residues; it reads YSDPDRRPSRQTPRETPEAAEGRRPG.

Its subcellular location is the membrane. The polypeptide is Putative transmembrane protein INAFM1 (Homo sapiens (Human)).